The following is a 313-amino-acid chain: MAAISDLSFMYRWFKNCNLVRNLSDKYVFITGCDSGFGNLLARQLVDRGMRVLAACFTKEGAQKLQQDTSYQLQTILLDVTKTESIKAATQWVRDQVGEQGLWALVNNAGVGLPSGPNEWLTKEDFVKVINVNLVGLIEVTLHMLPMVKKARGRVVNMSSSGGRVAVIGGGYCISKFGVEAFSDSIRRELHYFGVKVSIIEPGNFRTAILGKDGLEKHMRKLWERLPPETRESYGEEYFRIYTDNLKSTMQLADPRISEVTNSMEHAIVSRSPRIRYNPGLDAKLLYLPLAKFPTPVTDFILSRYLPRPADSV.

An NADP(+)-binding site is contributed by 29–53 (FITGCDSGFGNLLARQLVDRGMRVL). Substrate is bound at residue Ser-160. The Proton acceptor role is filled by Tyr-172. Ser-185 is modified (phosphoserine).

It belongs to the short-chain dehydrogenases/reductases (SDR) family.

Its subcellular location is the cytoplasm. It catalyses the reaction a N-[omega-(9R,10R)-epoxy-(13R)-hydroxy-(11E)-octadecenoyloxy]acyl-beta-D-glucosyl-(1&lt;-&gt;1)-sphing-4E-enine + NAD(+) = a N-[omega-(9R,10R)-epoxy-13-oxo-(11E)-octadecenoyloxy]acyl-beta-D-glucosyl-(1&lt;-&gt;1)-sphing-4E-enine + NADH + H(+). It carries out the reaction a N-[omega-(9R,10R)-epoxy-(13R)-hydroxy-(11E)-octadecenoyloxy]-acylsphing-4E-enine + NAD(+) = a N-[omega-(9R,10R)-epoxy-13-oxo-(11E)-octadecenoyloxy]-acylsphing-4E-enine + NADH + H(+). Plays a crucial role in the formation of the epidermal permeability barrier. Catalyzes the NAD+-dependent dehydrogenation of the linoleate 9,10-trans-epoxy-11E-13-alcohol esterified in omega-O-acylceramides (such as in N-[omega-(9R,10R)-epoxy-(13R)-hydroxy-(11E)-octadecenoyloxy]-acylsphing-4E-enine) to the corresponding 13-ketone, the reactive moiety required for binding of epidermal ceramides to proteins. Displays weak conversion of all-trans-retinal to all-trans-retinol in the presence of NADH. Has apparently no steroid dehydrogenase activity. The polypeptide is Short-chain dehydrogenase/reductase family 9C member 7 (SDR9C7) (Bos taurus (Bovine)).